The sequence spans 108 residues: Anti-sigma-B factor antagonist (108 aa).

The STAS domain occupies 3-108 (LNIETITHDD…MHVNEGTEVE (106 aa)). S57 carries the post-translational modification Phosphoserine.

It belongs to the anti-sigma-factor antagonist family. Post-translationally, phosphorylated by RsbW on a serine residue.

Its function is as follows. Positive regulator of sigma-B activity. Non-phosphorylated RsbV binds to RsbW, preventing its association with sigma-B. When phosphorylated, releases RsbW, which is then free to complex with and inactivate sigma-B. This Staphylococcus epidermidis protein is Anti-sigma-B factor antagonist (rsbV).